A 287-amino-acid chain; its full sequence is BURP domain-containing protein 2 (287 aa).

The N-terminal stretch at 1 to 21 is a signal peptide; sequence MARSLAALLLLLVAAAGASHA. A BURP domain is found at 67-287; sequence FFLEKDLFPG…PQDDMLWVRN (221 aa).

In terms of tissue distribution, expressed in shoot.

In Oryza sativa subsp. japonica (Rice), this protein is BURP domain-containing protein 2 (BURP2).